A 104-amino-acid chain; its full sequence is MQKIRKGDKVVVLSGKDKGCSGEVIKVSPKENKAFVRGINMVKRHQRQTQKQEAGIISKEAPVHLSNLAIADPKDGKPTRVGFRMNADGNKVRFAKRSGELING.

The protein belongs to the universal ribosomal protein uL24 family. In terms of assembly, part of the 50S ribosomal subunit.

One of two assembly initiator proteins, it binds directly to the 5'-end of the 23S rRNA, where it nucleates assembly of the 50S subunit. Functionally, one of the proteins that surrounds the polypeptide exit tunnel on the outside of the subunit. The polypeptide is Large ribosomal subunit protein uL24 (Bartonella tribocorum (strain CIP 105476 / IBS 506)).